Reading from the N-terminus, the 394-residue chain is NAD(P)H-quinone oxidoreductase subunit H (394 aa).

The protein belongs to the complex I 49 kDa subunit family. As to quaternary structure, NDH-1 can be composed of about 15 different subunits; different subcomplexes with different compositions have been identified which probably have different functions. Post-translationally, the initiator methionine has been seen to be kept and removed.

Its subcellular location is the cellular thylakoid membrane. The catalysed reaction is a plastoquinone + NADH + (n+1) H(+)(in) = a plastoquinol + NAD(+) + n H(+)(out). The enzyme catalyses a plastoquinone + NADPH + (n+1) H(+)(in) = a plastoquinol + NADP(+) + n H(+)(out). NDH-1 shuttles electrons from an unknown electron donor, via FMN and iron-sulfur (Fe-S) centers, to quinones in the respiratory and/or the photosynthetic chain. The immediate electron acceptor for the enzyme in this species is believed to be plastoquinone. Couples the redox reaction to proton translocation, and thus conserves the redox energy in a proton gradient. Cyanobacterial NDH-1 also plays a role in inorganic carbon-concentration. The polypeptide is NAD(P)H-quinone oxidoreductase subunit H (ndhH) (Synechocystis sp. (strain ATCC 27184 / PCC 6803 / Kazusa)).